The primary structure comprises 408 residues: 2-acyl-4-prenylphloroglucinol 6-prenyltransferase, chloroplastic (408 aa).

The N-terminal 46 residues, 1 to 46 (MELSSACNLSLKPNYYYYPTSLFPSNNSYNNLKASSYYQTQRPIKC), are a transit peptide targeting the chloroplast. The next 9 helical transmembrane spans lie at 119–139 (PIPF…ELLK), 146–166 (WQLM…HIYI), 193–213 (SVKS…LLMI), 217–237 (CGLF…MYSV), 257–277 (IGIG…GLPF), 281–301 (PPFT…SILK), 326–346 (IVLV…GVAI), 355–375 (YIMI…TWLL), and 388–408 (YYHF…FIST).

This sequence belongs to the UbiA prenyltransferase family. As to quaternary structure, homo- and heteromer. Interacts with PT1L, forming a functional metabolon. The cofactor is Mg(2+). As to expression, expressed in trichomes.

Its subcellular location is the plastid. It is found in the chloroplast membrane. The catalysed reaction is a 2-acyl-4-prenylphloroglucinol + dimethylallyl diphosphate = a 2-acyl-4,6-diprenylphloroglucinol + diphosphate. It carries out the reaction a 2-acyl-4,6-diprenylphloroglucinol + dimethylallyl diphosphate = a 2-acyl-4,6,6-triprenylphloroglucinol + diphosphate. Its pathway is secondary metabolite biosynthesis. Involved in the biosynthesis of prenylated phenolics natural products which contribute to the bitter taste of beer and display broad biological activities. Catalyzes the two last prenylation steps in the beta-bitter acid pathway. Uses dimethylallyl diphosphate (DMAPP) as the prenyl donor. In Humulus lupulus (European hop), this protein is 2-acyl-4-prenylphloroglucinol 6-prenyltransferase, chloroplastic.